The chain runs to 427 residues: Serine protease HTRA2, mitochondrial (427 aa).

The disordered stretch occupies residues 33–57; that stretch reads HTASSSKGSGGDNSKDQENNGQNKS. A helical membrane pass occupies residues 67 to 87; the sequence is VFQFCVPFSLGALVSAVLIEG. Residues 78–81 carry the IAP-binding motif; that stretch reads ALVS. Residues 144 to 307 form a serine protease region; that stretch reads SNGSGFVIEQ…IPIDYVKVFL (164 aa). Catalysis depends on charge relay system residues His-162, Asp-194, and Ser-271. A PDZ domain is found at 330–415; that stretch reads MGITMLTLTP…DLEIVILRGV (86 aa).

The protein belongs to the peptidase S1C family. As to quaternary structure, interacts with th/DIAP1 (via BIR 2 domain).

The protein resides in the mitochondrion intermembrane space. Its subcellular location is the mitochondrion membrane. The enzyme catalyses Cleavage of non-polar aliphatic amino-acids at the P1 position, with a preference for Val, Ile and Met. At the P2 and P3 positions, Arg is selected most strongly with a secondary preference for other hydrophilic residues.. In terms of biological role, serine protease that shows proteolytic activity against a non-specific substrate beta-casein. Promotes or induces cell death either by direct binding to and inhibition of BIRC proteins (also called inhibitor of apoptosis proteins, IAPs), leading to an increase in caspase activity, or by a BIRC inhibition-independent, caspase-independent and serine protease activity-dependent mechanism. Can antagonize antiapoptotic activity of th/Diap1 by directly inducing the degradation of th/Diap1. The sequence is that of Serine protease HTRA2, mitochondrial from Drosophila persimilis (Fruit fly).